The following is a 165-amino-acid chain: Phosphopantetheine adenylyltransferase (165 aa).

Ser8 is a substrate binding site. ATP-binding positions include 8–9 (SF) and His16. Positions 40, 72, and 86 each coordinate substrate. Residues 87–89 (GLR), Glu97, and 122–128 (YSFLSSS) each bind ATP.

Belongs to the bacterial CoaD family. Homohexamer. The cofactor is Mg(2+).

The protein localises to the cytoplasm. The enzyme catalyses (R)-4'-phosphopantetheine + ATP + H(+) = 3'-dephospho-CoA + diphosphate. Its pathway is cofactor biosynthesis; coenzyme A biosynthesis; CoA from (R)-pantothenate: step 4/5. Reversibly transfers an adenylyl group from ATP to 4'-phosphopantetheine, yielding dephospho-CoA (dPCoA) and pyrophosphate. This Synechococcus sp. (strain WH7803) protein is Phosphopantetheine adenylyltransferase.